The chain runs to 397 residues: MDVYRIRISVFFLLVLLTFAALTTATNIPRRQLSNKKYKGPCRAENAIDKCWRCDPNWAENRQKMADCALGFGSNAIGGKLGRIYVVTDNSDDDVVDPKPGTLRYGVIQKEPLWIIFGKNMKIKLSRELIVTSNKTIDGRGFNVHIQNGAGIKIQSASNIIISNLRIHNIVPTPGGLLRESEDHVGLRGSDEGDGISIFSSHDIWIDHISMSRATDGLIDAVAASTNITISNCHFTDHEKVMLFGANDHYVLDKDMKITLAYNHFGKRLDQRMPRCRFGFFHLVNNDYTHWERYAIGGSSGATIISQGNRFIAEDELLVKEVTYREKLTASVAEWMKWTWISDGDDMENGATFTPSGDQNLLDKIDHLNLIKPEPSSKVGILTKFSGALSCVKGRPC.

Positions 1-25 (MDVYRIRISVFFLLVLLTFAALTTA) are cleaved as a signal peptide. Asn134 is a glycosylation site (N-linked (GlcNAc...) asparagine). Residues Asp191, Asp216, and Asp220 each contribute to the Ca(2+) site. Asn227 carries an N-linked (GlcNAc...) asparagine glycan. Residue Arg272 is part of the active site.

Belongs to the polysaccharide lyase 1 family. Ca(2+) serves as cofactor.

The enzyme catalyses Eliminative cleavage of (1-&gt;4)-alpha-D-galacturonan to give oligosaccharides with 4-deoxy-alpha-D-galact-4-enuronosyl groups at their non-reducing ends.. It participates in glycan metabolism; pectin degradation; 2-dehydro-3-deoxy-D-gluconate from pectin: step 2/5. The sequence is that of Pectate lyase from Nicotiana tabacum (Common tobacco).